The primary structure comprises 692 residues: Highly divergent homeobox (692 aa).

Residues 3–63 (LRSVFTVEQQ…NKRRKMSSKS (61 aa)) constitute a DNA-binding region (homeobox 1). Residues 117-133 (SSSSKQGTTKHTNTQIT) are compositionally biased toward polar residues. Residues 117 to 136 (SSSSKQGTTKHTNTQITEAH) are disordered. Residues Lys137, Lys142, Lys146, Lys165, Lys174, Lys196, Lys214, Lys223, and Lys234 each participate in a glycyl lysine isopeptide (Lys-Gly) (interchain with G-Cter in SUMO2) cross-link. A DNA-binding region (homeobox 2) is located at residues 437–500 (ALQDRTQFSD…NRRRKYRLMG (64 aa)). Disordered stretches follow at residues 505–541 (PPRG…DNDR) and 647–692 (KDQQ…SDSL). The segment covering 676 to 692 (TSLSVSSLSEKNASDSL) has biased composition (polar residues).

The protein localises to the nucleus. The polypeptide is Highly divergent homeobox (Hdx) (Mus musculus (Mouse)).